The sequence spans 21 residues: Paulistine (21 aa).

A disulfide bridge connects residues Cys7 and Cys14. Thr21 is subject to Threonine amide.

This sequence belongs to the sylv/frat/paul family. Occurs in oxidized and reduced states which are thought to adopt a compact globular and linear structure, respectively.

Induces transient hyperalgesia and paw edema in mice. Probably exerts its effects via different pathways in an oxidation state-dependent way. This chain is Paulistine, found in Polybia paulista (Neotropical social wasp).